The sequence spans 248 residues: 23S rRNA (guanosine(2553)-2'-O)-methyltransferase RlmP (248 aa).

Residues R123, G204, V224, and L233 each coordinate S-adenosyl-L-methionine.

This sequence belongs to the class IV-like SAM-binding methyltransferase superfamily. RNA methyltransferase TrmH family. Homodimer.

It localises to the cytoplasm. It carries out the reaction guanosine(2553) in 23S rRNA + S-adenosyl-L-methionine = 2'-O-methylguanosine(2553) in 23S rRNA + S-adenosyl-L-homocysteine + H(+). Specifically methylates the ribose of guanosine 2553 (G2553) in 23S rRNA. When the target G2553 is mutated, is able to methylate the ribose of adenosine, but it cannot methylate cytidine nor uridine. Modifies free 23S rRNA but not the fully assembled ribosome nor the 50S subunit, suggesting that the modification occurs early during ribosome biogenesis. The polypeptide is 23S rRNA (guanosine(2553)-2'-O)-methyltransferase RlmP (Bacillus subtilis (strain 168)).